The primary structure comprises 782 residues: Endonuclease MutS2 (782 aa).

336–343 (GPNTGGKT) provides a ligand contact to ATP. In terms of domain architecture, Smr spans 707–782 (LDLRGYRYED…GFGVTVATLK (76 aa)).

The protein belongs to the DNA mismatch repair MutS family. MutS2 subfamily. In terms of assembly, homodimer. Binds to stalled ribosomes, contacting rRNA.

In terms of biological role, endonuclease that is involved in the suppression of homologous recombination and thus may have a key role in the control of bacterial genetic diversity. Acts as a ribosome collision sensor, splitting the ribosome into its 2 subunits. Detects stalled/collided 70S ribosomes which it binds and splits by an ATP-hydrolysis driven conformational change. Acts upstream of the ribosome quality control system (RQC), a ribosome-associated complex that mediates the extraction of incompletely synthesized nascent chains from stalled ribosomes and their subsequent degradation. Probably generates substrates for RQC. This is Endonuclease MutS2 from Staphylococcus aureus (strain COL).